A 242-amino-acid polypeptide reads, in one-letter code: Biosynthetic peptidoglycan transglycosylase (242 aa).

Residues 19–39 (ILVVLAVFWGGGIALFSVVPV) form a helical membrane-spanning segment.

This sequence belongs to the glycosyltransferase 51 family.

The protein resides in the cell inner membrane. It carries out the reaction [GlcNAc-(1-&gt;4)-Mur2Ac(oyl-L-Ala-gamma-D-Glu-L-Lys-D-Ala-D-Ala)](n)-di-trans,octa-cis-undecaprenyl diphosphate + beta-D-GlcNAc-(1-&gt;4)-Mur2Ac(oyl-L-Ala-gamma-D-Glu-L-Lys-D-Ala-D-Ala)-di-trans,octa-cis-undecaprenyl diphosphate = [GlcNAc-(1-&gt;4)-Mur2Ac(oyl-L-Ala-gamma-D-Glu-L-Lys-D-Ala-D-Ala)](n+1)-di-trans,octa-cis-undecaprenyl diphosphate + di-trans,octa-cis-undecaprenyl diphosphate + H(+). It functions in the pathway cell wall biogenesis; peptidoglycan biosynthesis. Functionally, peptidoglycan polymerase that catalyzes glycan chain elongation from lipid-linked precursors. This Citrobacter koseri (strain ATCC BAA-895 / CDC 4225-83 / SGSC4696) protein is Biosynthetic peptidoglycan transglycosylase.